We begin with the raw amino-acid sequence, 330 residues long: Olfactory receptor 5P73 (330 aa).

At 1–28 (MAFLEDGNHTTVTEFFLLGLTDDPVLRD) the chain is on the extracellular side. Residue N8 is glycosylated (N-linked (GlcNAc...) asparagine). Residues 29 to 49 (ILFIIILCIYLVTVSGNLSTI) form a helical membrane-spanning segment. Residues 50 to 57 (LLIRVSSQ) are Cytoplasmic-facing. The chain crosses the membrane as a helical span at residues 58–78 (LHHPMYFILSHLASVDIGISS). Residues 79-102 (SVTPNMLATFLVKQNTISYIGCSI) lie on the Extracellular side of the membrane. Residues C100 and C192 are joined by a disulfide bond. Residues 103-123 (QFTSAAFFGTVECFLLATMAY) traverse the membrane as a helical segment. The Cytoplasmic segment spans residues 124 to 136 (DRFVAICNPLLYS). The helical transmembrane segment at 137–157 (TKMSTEACIQLVVGSYIQGFL) threads the bilayer. The Extracellular portion of the chain corresponds to 158 to 199 (NASFFTLSFFSLFFCGPNRINDFYCDFAPLLELSCSDVTVAV). A helical membrane pass occupies residues 200–220 (VITSISAGFITLTTVFVIAIS). The Cytoplasmic portion of the chain corresponds to 221 to 240 (YSCIFITIMKMHSTESRCKA). A helical membrane pass occupies residues 241–261 (FSTCTSHLTAVILFYGTAIFI). Residues 262–274 (YVMPKSSYSTDQN) lie on the Extracellular side of the membrane. The helical transmembrane segment at 275 to 295 (KVLSIFYTVVIPMLNPLIYSL) threads the bilayer. At 296–330 (RNNEIKEALKRHLGKKVFSYGNLFCKTHYNHNYPV) the chain is on the cytoplasmic side.

Belongs to the G-protein coupled receptor 1 family.

Its subcellular location is the cell membrane. Potential odorant receptor. The protein is Olfactory receptor 5P73 of Mus musculus (Mouse).